A 531-amino-acid chain; its full sequence is Cytochrome P450 monooxygenase peniB (531 aa).

Residues 30–48 form a helical membrane-spanning segment; that stretch reads ILSIAAVVFLGYLLLRPLF. A heme-binding site is contributed by Cys445.

The protein belongs to the cytochrome P450 family. Requires heme as cofactor.

It localises to the membrane. The catalysed reaction is silphinene-15-oate + 2 reduced [NADPH--hemoprotein reductase] + 2 O2 = gamma-lactone-2-keto[5.5.5.5]fenestrane + 2 oxidized [NADPH--hemoprotein reductase] + 3 H2O + H(+). It participates in secondary metabolite biosynthesis; terpenoid biosynthesis. In terms of biological role, cytochrome P450 monooxygenase; part of the gene cluster that mediates the biosynthesis of penifulvin A, a potent insecticidal sesquiterpene that features a [5.5.5.6]dioxafenestrane ring. Within the pathway, peniB catalyzes the multi-step oxidation of silphinene to synthesize gamma-lactone-2-keto[5.5.5.5]fenestrane, including oxidation of the C15 methylgroup in silphinene to form silphinene-15-oic acid, activationof the C1-C2 double bond to form the gamma-lactone-2-hydroxy[5.5.5.5]fenestrane, and dehydrogenation of the hydroxy group at C2 of gamma-lactone-2-hydroxy[5.5.5.5]fenestrane to generate gamma-lactone-2-keto[5.5.5.5]fenestrane. The first step of the pathway is performed by the sesquiterpene cyclase peniA that generates the angular triquinane scaffold silphinene via cyclization of the linear farnesyl pyrophosphate (FPP). The cytochrome P450 monooxygenase peniB and the flavin-dependent monooxygenase peniC then catalyze a series of oxidation reactions to transform silphinene into penifulvin A. This is Cytochrome P450 monooxygenase peniB from Penicillium patulum (Penicillium griseofulvum).